The primary structure comprises 184 residues: Large ribosomal subunit protein uL6 (184 aa).

This sequence belongs to the universal ribosomal protein uL6 family. In terms of assembly, part of the 50S ribosomal subunit.

Functionally, this protein binds to the 23S rRNA, and is important in its secondary structure. It is located near the subunit interface in the base of the L7/L12 stalk, and near the tRNA binding site of the peptidyltransferase center. This is Large ribosomal subunit protein uL6 from Thermosipho melanesiensis (strain DSM 12029 / CIP 104789 / BI429).